The sequence spans 182 residues: ATP-dependent protease subunit HslV (182 aa).

Residue T10 is part of the active site. Na(+) is bound by residues A164, C167, and T170.

It belongs to the peptidase T1B family. HslV subfamily. In terms of assembly, a double ring-shaped homohexamer of HslV is capped on each side by a ring-shaped HslU homohexamer. The assembly of the HslU/HslV complex is dependent on binding of ATP.

It is found in the cytoplasm. The catalysed reaction is ATP-dependent cleavage of peptide bonds with broad specificity.. Allosterically activated by HslU binding. Protease subunit of a proteasome-like degradation complex believed to be a general protein degrading machinery. This Chelativorans sp. (strain BNC1) protein is ATP-dependent protease subunit HslV.